The sequence spans 125 residues: C-X-C motif chemokine 9 (125 aa).

The first 21 residues, 1-21 (MKKSAPLFLGIIFLTLTGVQG), serve as a signal peptide directing secretion. Intrachain disulfides connect Cys-30–Cys-57 and Cys-32–Cys-73. The interval 91–125 (QVNQKKKQRKGKKYKKTKKVPKVKRSQRPSQKKTT) is disordered. A compositionally biased stretch (basic residues) spans 93 to 125 (NQKKKQRKGKKYKKTKKVPKVKRSQRPSQKKTT).

This sequence belongs to the intercrine alpha (chemokine CxC) family.

The protein localises to the secreted. Cytokine that affects the growth, movement, or activation state of cells that participate in immune and inflammatory response. Chemotactic for activated T-cells. Binds to CXCR3. The sequence is that of C-X-C motif chemokine 9 (CXCL9) from Bos taurus (Bovine).